Reading from the N-terminus, the 440-residue chain is Replication factor C large subunit (440 aa).

Gly48–Thr55 contacts ATP.

The protein belongs to the activator 1 small subunits family. RfcL subfamily. Heteromultimer composed of small subunits (RfcS) and large subunits (RfcL).

Functionally, part of the RFC clamp loader complex which loads the PCNA sliding clamp onto DNA. In Sulfurisphaera tokodaii (strain DSM 16993 / JCM 10545 / NBRC 100140 / 7) (Sulfolobus tokodaii), this protein is Replication factor C large subunit.